Here is a 311-residue protein sequence, read N- to C-terminus: Nod factor export ATP-binding protein I (311 aa).

Residues 13-243 (IDLAGVSKSY…QIGCPVIEIY (231 aa)) enclose the ABC transporter domain. 45–52 (GPNGAGKS) lines the ATP pocket.

The protein belongs to the ABC transporter superfamily. Lipooligosaccharide exporter (TC 3.A.1.102) family. As to quaternary structure, the complex is composed of two ATP-binding proteins (NodI) and two transmembrane proteins (NodJ).

Its subcellular location is the cell inner membrane. In terms of biological role, part of the ABC transporter complex NodIJ involved in the export of the nodulation factors (Nod factors), the bacterial signal molecules that induce symbiosis and subsequent nodulation induction. Nod factors are LCO (lipo-chitin oligosaccharide), a modified beta-1,4-linked N-acetylglucosamine oligosaccharide. This subunit is responsible for energy coupling to the transport system. The polypeptide is Nod factor export ATP-binding protein I (Rhizobium leguminosarum bv. viciae).